Reading from the N-terminus, the 48-residue chain is Large ribosomal subunit protein eL40 (48 aa).

Belongs to the eukaryotic ribosomal protein eL40 family.

In Methanosphaerula palustris (strain ATCC BAA-1556 / DSM 19958 / E1-9c), this protein is Large ribosomal subunit protein eL40.